We begin with the raw amino-acid sequence, 764 residues long: Probable 5-methyltetrahydropteroyltriglutamate--homocysteine methyltransferase (764 aa).

2 residues coordinate 5-methyltetrahydropteroyltri-L-glutamate: Lys-19 and Asn-126. Ser-182 carries the phosphoserine modification. Phosphothreonine is present on Thr-441. L-homocysteine contacts are provided by residues 442–444 (IGS) and Glu-495. Residues 442–444 (IGS) and Glu-495 contribute to the L-methionine site. 5-methyltetrahydropteroyltri-L-glutamate contacts are provided by residues Asp-500, Tyr-523, 526-527 (RC), and Trp-572. Asp-610 contributes to the L-homocysteine binding site. Asp-610 provides a ligand contact to L-methionine. The Zn(2+) site is built by His-652, Cys-654, and Glu-676. The active-site Proton donor is the His-703. Zn(2+) is bound at residue Cys-735.

It belongs to the vitamin-B12 independent methionine synthase family. The cofactor is Zn(2+).

Its subcellular location is the nucleus. The protein resides in the cytoplasm. The enzyme catalyses 5-methyltetrahydropteroyltri-L-glutamate + L-homocysteine = tetrahydropteroyltri-L-glutamate + L-methionine. The protein operates within amino-acid biosynthesis; L-methionine biosynthesis via de novo pathway; L-methionine from L-homocysteine (MetE route): step 1/1. Catalyzes the transfer of a methyl group from 5-methyltetrahydrofolate to homocysteine resulting in methionine formation. This Schizosaccharomyces pombe (strain 972 / ATCC 24843) (Fission yeast) protein is Probable 5-methyltetrahydropteroyltriglutamate--homocysteine methyltransferase (met26).